The sequence spans 389 residues: 8-amino-7-oxononanoate synthase (389 aa).

Arginine 31 serves as a coordination point for substrate. 109–110 lines the pyridoxal 5'-phosphate pocket; the sequence is GY. Histidine 134 is a substrate binding site. Pyridoxal 5'-phosphate-binding positions include serine 180, 205 to 208, and 236 to 239; these read DEAH and TLSK. At lysine 239 the chain carries N6-(pyridoxal phosphate)lysine. Threonine 349 provides a ligand contact to substrate.

Belongs to the class-II pyridoxal-phosphate-dependent aminotransferase family. BioF subfamily. Homodimer. It depends on pyridoxal 5'-phosphate as a cofactor.

It carries out the reaction 6-carboxyhexanoyl-[ACP] + L-alanine + H(+) = (8S)-8-amino-7-oxononanoate + holo-[ACP] + CO2. It participates in cofactor biosynthesis; biotin biosynthesis. Its function is as follows. Catalyzes the decarboxylative condensation of pimeloyl-[acyl-carrier protein] and L-alanine to produce 8-amino-7-oxononanoate (AON), [acyl-carrier protein], and carbon dioxide. The chain is 8-amino-7-oxononanoate synthase from Mycobacterium ulcerans (strain Agy99).